The following is a 494-amino-acid chain: 3-octaprenyl-4-hydroxybenzoate carboxy-lyase (494 aa).

Mn(2+) is bound at residue asparagine 172. Prenylated FMN-binding positions include isoleucine 175–arginine 177, arginine 189–leucine 191, and arginine 194–glycine 195. Glutamate 238 is a Mn(2+) binding site. Aspartate 294 acts as the Proton donor in catalysis.

The protein belongs to the UbiD family. Homohexamer. Requires prenylated FMN as cofactor. Mn(2+) serves as cofactor.

It is found in the cell membrane. The enzyme catalyses a 4-hydroxy-3-(all-trans-polyprenyl)benzoate + H(+) = a 2-(all-trans-polyprenyl)phenol + CO2. It functions in the pathway cofactor biosynthesis; ubiquinone biosynthesis. In terms of biological role, catalyzes the decarboxylation of 3-octaprenyl-4-hydroxy benzoate to 2-octaprenylphenol, an intermediate step in ubiquinone biosynthesis. The chain is 3-octaprenyl-4-hydroxybenzoate carboxy-lyase from Herminiimonas arsenicoxydans.